The chain runs to 390 residues: Alpha-2B adrenergic receptor (390 aa).

Residues 1 to 25 (AIATVITFLILFTIFGNSLVILAVL) traverse the membrane as a helical segment. Residues 26–36 (TSRSLRAPQNL) lie on the Cytoplasmic side of the membrane. A helical transmembrane segment spans residues 37–62 (FLVSLAAADIMVATLIIPFSLANELL). At 63 to 72 (GYWYFRRTWC) the chain is on the extracellular side. A disulfide bridge links C72 with C151. A helical membrane pass occupies residues 73–95 (EVYLALDVLFCTSSIVHLCAISL). The Cytoplasmic segment spans residues 96-117 (DRYWAVSRALEYNSKRTPRRIK). Residues 118-140 (CIILTVWLIAAAISLPPLIYKGD) traverse the membrane as a helical segment. Residues 141 to 156 (QGPQPRGRPQCKLNQE) are Extracellular-facing. Residues 157 to 180 (AWYILSSSIGSFFAPCLIMILVYL) form a helical membrane-spanning segment. The Cytoplasmic portion of the chain corresponds to 181-354 (RIYLIAKRSH…LTREKRFTFV (174 aa)). Disordered stretches follow at residues 191–218 (RRGP…PSAL) and 233–311 (EANG…PLQQ). The span at 280-292 (LEEEADKEEEEEC) shows a compositional bias: acidic residues. A helical membrane pass occupies residues 355–378 (LAVVIGVFVLCWFPFFFSYSLGAI). Residues 379 to 390 (CPQHCKVPHGLF) are Extracellular-facing.

Belongs to the G-protein coupled receptor 1 family. Adrenergic receptor subfamily. ADRA2B sub-subfamily. In terms of assembly, interacts with RAB26. Interacts with PPP1R9B. Interacts with GGA1, GGA2 and GGA3.

The protein localises to the cell membrane. Functionally, alpha-2 adrenergic receptors mediate the catecholamine-induced inhibition of adenylate cyclase through the action of G proteins. This chain is Alpha-2B adrenergic receptor (ADRA2B), found in Dugong dugon (Dugong).